The primary structure comprises 97 residues: Lipolysis-activating peptide 1-alpha chain (97 aa).

An N-terminal signal peptide occupies residues 1 to 21 (MNIMLFCSVFILVSLTGLSVS). One can recognise an LCN-type CS-alpha/beta domain in the interval 25–88 (PGNYPMSLYG…FWAAHKNHCK (64 aa)). 3 disulfide bridges follow: Cys-39-Cys-62, Cys-48-Cys-67, and Cys-52-Cys-69.

Belongs to the long (3 C-C) scorpion toxin superfamily. As to quaternary structure, monomer (edited version) and heterodimer (non-edited version) of this alpha chain and a beta chain (AC P0CI43). As to expression, expressed by the venom gland.

Its subcellular location is the secreted. Functionally, the heterodimer non-edited LVP1 induces lipolysis in rat adipocytes. Induction of lipolysis by LVP1 appears to be mediated through the beta-2 adrenergic receptor pathway (ADRB2). In terms of biological role, the edited BmKBTx-like, similar to beta-toxins, may modulate voltage-gated sodium channels (Nav) and may block voltage-gated potassium channels (Kv). In Lychas mucronatus (Chinese swimming scorpion), this protein is Lipolysis-activating peptide 1-alpha chain.